A 64-amino-acid polypeptide reads, in one-letter code: Protein DsrB (64 aa).

This sequence belongs to the DsrB family.

This chain is Protein DsrB, found in Salmonella enteritidis PT4 (strain P125109).